A 554-amino-acid chain; its full sequence is Apyrase (554 aa).

The N-terminal stretch at 1-21 is a signal peptide; that stretch reads MFKITVFIYVLQLILPSKVHS. Residues Asp43, His45, Asp92, Asn124, His224, and His248 each coordinate a divalent metal cation. Arg358, Asn394, Arg399, Phe418, Phe504, and Asp510 together coordinate AMP.

It belongs to the 5'-nucleotidase family. The cofactor is a divalent metal cation. As to expression, salivary gland (at protein level).

The protein resides in the secreted. The catalysed reaction is a ribonucleoside 5'-triphosphate + 2 H2O = a ribonucleoside 5'-phosphate + 2 phosphate + 2 H(+). In terms of biological role, facilitates hematophagy by inhibiting ADP-dependent platelet aggregation in the host. Cleaves adenosine triphosphate (ATP) and adenosine diphosphate (ADP) to adenosine monophosphate (AMP) and inorganic phosphate. Shows potential for antithrombotic activity. Can induce basophil activation. May reduce probing time by facilitating the speed of locating blood. The polypeptide is Apyrase (Tabanus yao (Horsefly)).